The following is a 217-amino-acid chain: MDTSKVHGNVKPFRCPGYKQASSPSFSPDACRCPHWHHLALKSGCAGLILLLLSLIGLSVLVRFLVQKPPIEKCSVAAQENRTELTGRSAILECPRYWHPHWNKCLFVSQISRPWAEGRDACSMEDAILLLIENKEELRFVQNLIKGKEQLFFIGLKYVQKEKIWKWIDGSILNPNLLRITGKDKENSCAIISHTEVFSDSCSSDNHWICQKTLIHV.

Residues 1–45 (MDTSKVHGNVKPFRCPGYKQASSPSFSPDACRCPHWHHLALKSGC) lie on the Cytoplasmic side of the membrane. The short motif at 31-34 (CRCP) is the LCK-binding motif element. Residues 46 to 66 (AGLILLLLSLIGLSVLVRFLV) traverse the membrane as a helical; Signal-anchor for type II membrane protein segment. Over 67–217 (QKPPIEKCSV…WICQKTLIHV (151 aa)) the chain is Extracellular. Asn81 is a glycosylation site (N-linked (GlcNAc...) asparagine). The region spanning 101-211 (HWNKCLFVSQ…CSSDNHWICQ (111 aa)) is the C-type lectin domain. 2 disulfides stabilise this stretch: Cys122–Cys210 and Cys189–Cys202.

Highly expressed in dendritic cells. Detectable in natural killer cells.

It is found in the membrane. In terms of biological role, binds CLEC2I/Clr-g leading to activation of natural killer cells or costimulation of IL-2 production and proliferation of T-cells in response to antigen stimulation. May contribute to the formation of the immunological synapse between T-cells and antigen-presenting dendritic cells. This Mus musculus (Mouse) protein is Killer cell lectin-like receptor subfamily B member 1F (Klrb1f).